A 64-amino-acid polypeptide reads, in one-letter code: SGRGKNCGGACNSNPCSCGNDCKCGAGCNCDRCSSCHCSNDDCKCGSQCTGSGSCKCGSACGCK.

S1 is modified (N-acetylserine). 18 residues coordinate Cu(+): C7, C11, C16, C18, C22, C24, C28, C30, C33, C36, C38, C43, C45, C49, C55, C57, C61, and C63.

This sequence belongs to the metallothionein superfamily. Type 2 family.

The metallothioneins are involved in the cellular sequestration of toxic metal ions and regulation of essential trace elements. This isoform binds exclusively copper. This chain is Copper-metallothionein, found in Helix pomatia (Roman snail).